Reading from the N-terminus, the 696-residue chain is Polyribonucleotide nucleotidyltransferase (696 aa).

Residues Asp-483 and Asp-489 each coordinate Mg(2+). Positions 550-609 (PRITTIYVKTDKIRDVIGSGGKNIRGITEATGVTIDIDDTGKINIASTDKAACDMAIKMI) constitute a KH domain. The S1 motif domain occupies 619–687 (GKLYMGLVKK…KQGKIKLSRK (69 aa)).

It belongs to the polyribonucleotide nucleotidyltransferase family. Mg(2+) is required as a cofactor.

The protein resides in the cytoplasm. The catalysed reaction is RNA(n+1) + phosphate = RNA(n) + a ribonucleoside 5'-diphosphate. Involved in mRNA degradation. Catalyzes the phosphorolysis of single-stranded polyribonucleotides processively in the 3'- to 5'-direction. The polypeptide is Polyribonucleotide nucleotidyltransferase (Geotalea daltonii (strain DSM 22248 / JCM 15807 / FRC-32) (Geobacter daltonii)).